The sequence spans 911 residues: MPRPRAAKEEETELLAQHQESPRPSSDGSEASASSISTTSLVLEHINDGGFNGARSKVSEKYTDDGNGDLGHARERFDIEDGKFHPLTPVDKKARRTLWIVGTICAVGWALALVSFLMNGNYKHSSTRPHDPDASVTKGSGKKITLDNVLGGQFYPQSQSVSWIAGPKGEDGLLLEKGVSGKDYLVVEDIRSKGNTEAAGDKFTLMKKGNFQIGEDIFIYPSNVWPSADFKKVLVMSEQQKNWRHSYTGLYWIFDVETQTGEPLDPENQSARVQYASFSPQSDAVVFTRDNNLYLRKLDSQKVVKITHDGGSELFYGVPDWVYEEEVFQDNSATWWSEDGKYVAFLRTDESMVPTYPVQYFVSRPSGKQPDAGKESYPEVREIKYPKAGAPNPIVTLQFYDIEKSEMFRVDIDNDFTDKDRLITEIVWAGKSGQVLVRETNRESDILKLILIDVSKRTGKTIREENVAKLDGGWFEVSHKTTFIPADSSLGRANDGYIDSVIHEGYDHIGYFTPLDSDKPILLTKGEWEVVEAPSRVDLKNNLVYYVSTERGSMERHPYVVALNGTDKREVMDHSGPAYYDSSFSTGGGYALMSYQGPGIPWQKIVSTPSNTEKFEKVLEENKALEKMVQKHELPILKYQTIDVDGFKLNVLERRPPHFSEKRKYPVLFYQYSGPGSQQVQRKFEVDFQSYIAANLGYIVVTVDGRGTGFLGRKLRCITRDNIGYYEAYDQIAAAKMWAAKKYVDAEKLAIWGWSYGGFTTLKTIEMDGGRTFKYGMAVAPVTDWRFYDSIYTERYMHTPQNNPTGYDNTSITDVHSLSQNVRFLIMHGVADDNVHMQNTLTLLDKLDVAGVENYDVHVFPDSDHSIYFHNAHKIVYDKLTWWLTNAFNGEWLKIQKVRPKAQADARSLGR.

The interval 1–39 is disordered; it reads MPRPRAAKEEETELLAQHQESPRPSSDGSEASASSISTT. The Cytoplasmic portion of the chain corresponds to 1–97; that stretch reads MPRPRAAKEE…TPVDKKARRT (97 aa). Low complexity predominate over residues 25-39; the sequence is SSDGSEASASSISTT. Residues 98–118 form a helical; Signal-anchor for type II membrane protein membrane-spanning segment; the sequence is LWIVGTICAVGWALALVSFLM. Over 119 to 911 the chain is Vacuolar; sequence NGNYKHSSTR…AQADARSLGR (793 aa). N-linked (GlcNAc...) asparagine glycans are attached at residues asparagine 268 and asparagine 564. Catalysis depends on serine 755, which acts as the Charge relay system. Asparagine 809 carries an N-linked (GlcNAc...) asparagine glycan. Residues aspartate 832 and histidine 865 each act as charge relay system in the active site.

It belongs to the peptidase S9B family.

Its subcellular location is the vacuole membrane. It carries out the reaction Release of an N-terminal dipeptide, Xaa-Yaa-|-Zaa-, from a polypeptide, preferentially when Yaa is Pro, provided Zaa is neither Pro nor hydroxyproline.. Its function is as follows. Type IV dipeptidyl-peptidase which removes N-terminal dipeptides sequentially from polypeptides having unsubstituted N-termini provided that the penultimate residue is proline. This is Probable dipeptidyl-aminopeptidase B (DAPB) from Phaeosphaeria nodorum (strain SN15 / ATCC MYA-4574 / FGSC 10173) (Glume blotch fungus).